We begin with the raw amino-acid sequence, 432 residues long: Trigger factor (432 aa).

Residues 161–246 (GTRATINFVG…VVKVESRELP (86 aa)) form the PPIase FKBP-type domain.

Belongs to the FKBP-type PPIase family. Tig subfamily.

Its subcellular location is the cytoplasm. The catalysed reaction is [protein]-peptidylproline (omega=180) = [protein]-peptidylproline (omega=0). Involved in protein export. Acts as a chaperone by maintaining the newly synthesized protein in an open conformation. Functions as a peptidyl-prolyl cis-trans isomerase. The sequence is that of Trigger factor from Aliivibrio fischeri (strain ATCC 700601 / ES114) (Vibrio fischeri).